Consider the following 246-residue polypeptide: Hydroxyacylglutathione hydrolase (246 aa).

Zn(2+)-binding residues include His-58, His-60, Asp-62, His-63, His-117, Asp-137, and His-175.

Belongs to the metallo-beta-lactamase superfamily. Glyoxalase II family. In terms of assembly, monomer. Zn(2+) serves as cofactor.

The catalysed reaction is an S-(2-hydroxyacyl)glutathione + H2O = a 2-hydroxy carboxylate + glutathione + H(+). It functions in the pathway secondary metabolite metabolism; methylglyoxal degradation; (R)-lactate from methylglyoxal: step 2/2. Functionally, thiolesterase that catalyzes the hydrolysis of S-D-lactoyl-glutathione to form glutathione and D-lactic acid. The sequence is that of Hydroxyacylglutathione hydrolase from Prochlorococcus marinus (strain MIT 9312).